A 487-amino-acid chain; its full sequence is Serine/threonine-protein kinase 4 (487 aa).

An N-acetylmethionine modification is found at M1. The residue at position 3 (T3) is a Phosphothreonine. One can recognise a Protein kinase domain in the interval 30–281; the sequence is FDVLEKLGEG…ATQLLQHPFV (252 aa). ATP is bound by residues 36 to 44 and K59; that span reads LGEGSYGSV. The Proton acceptor role is filled by D149. A Phosphothreonine; by autocatalysis modification is found at T183. S265 carries the post-translational modification Phosphoserine. Positions 290–310 form a coiled coil; sequence LRDLINEAMDVKLKRQESQQR. Basic and acidic residues predominate over residues 303-312; the sequence is KRQESQQREV. Residues 303–332 form a disordered region; it reads KRQESQQREVDQDDEENSEEDEMDSGTMVR. Acidic residues predominate over residues 313–326; the sequence is DQDDEENSEEDEMD. At S320 the chain carries Phosphoserine. A phosphothreonine mark is found at T340 and T367. The residue at position 387 (T387) is a Phosphothreonine; by PKB/AKT1. 2 positions are modified to phosphoserine: S410 and S414. Y433 carries the post-translational modification Phosphotyrosine. Positions 433 to 480 constitute an SARAH domain; sequence YEFLKSWTVEDLQKRLLALDPMMEQEIEEIRQKYQSKRQPILDAIEAK.

Belongs to the protein kinase superfamily. STE Ser/Thr protein kinase family. STE20 subfamily. In terms of assembly, homodimer; mediated via the coiled-coil region. Interacts with NORE1, which inhibits autoactivation. Interacts with and stabilizes SAV1. Interacts with RASSF1. Interacts with FOXO3. Interacts with RASSF2 (via SARAH domain). Interacts with AR, PKB/AKT1, TNNI3 and SIRT1. Interacts with DLG5 (via PDZ domain 3). Interacts with MARK3 and SCRIB in the presence of DLG5. Mg(2+) is required as a cofactor. In terms of processing, autophosphorylated on serine and threonine residues. Phosphorylation at Thr-387 by PKB/AKT1, leads to inhibition of its: kinase activity, nuclear translocation and autophosphorylation at Thr-183. It also diminishes its cleavage by caspases and its ability to phosphorylate FOXO3. Proteolytically cleaved by caspase-3 during apoptosis at Asp-326 and Asp-349 resulting in a 37 kDa or a 39 kDa subunit respectively. The 39 kDa subunit is further cleaved into the 37 kDa form. Proteolytic cleavage results in kinase activation and nuclear translocation of the truncated form (MST1/N). It is less likely that cleavage at Asp-349 is a prerequisite for activation as this site is not conserved in the murine ortholog.

It localises to the cytoplasm. Its subcellular location is the nucleus. The catalysed reaction is L-seryl-[protein] + ATP = O-phospho-L-seryl-[protein] + ADP + H(+). It carries out the reaction L-threonyl-[protein] + ATP = O-phospho-L-threonyl-[protein] + ADP + H(+). With respect to regulation, inhibited by the C-terminal non-catalytic region. Activated by caspase-cleavage. Full activation also requires homodimerization and autophosphorylation of Thr-183. Activated by RASSF1 which acts by preventing its dephosphorylation. Functionally, stress-activated, pro-apoptotic kinase which, following caspase-cleavage, enters the nucleus and induces chromatin condensation followed by internucleosomal DNA fragmentation. Key component of the Hippo signaling pathway which plays a pivotal role in organ size control and tumor suppression by restricting proliferation and promoting apoptosis. The core of this pathway is composed of a kinase cascade wherein STK3/MST2 and STK4/MST1, in complex with its regulatory protein SAV1, phosphorylates and activates LATS1/2 in complex with its regulatory protein MOB1, which in turn phosphorylates and inactivates YAP1 oncoprotein and WWTR1/TAZ. Phosphorylation of YAP1 by LATS2 inhibits its translocation into the nucleus to regulate cellular genes important for cell proliferation, cell death, and cell migration. STK3/MST2 and STK4/MST1 are required to repress proliferation of mature hepatocytes, to prevent activation of facultative adult liver stem cells (oval cells), and to inhibit tumor formation. Phosphorylates 'Ser-14' of histone H2B (H2BS14ph) during apoptosis. Phosphorylates FOXO3 upon oxidative stress, which results in its nuclear translocation and cell death initiation. Phosphorylates MOBKL1A, MOBKL1B and RASSF2. Phosphorylates TNNI3 (cardiac Tn-I) and alters its binding affinity to TNNC1 (cardiac Tn-C) and TNNT2 (cardiac Tn-T). Phosphorylates FOXO1 on 'Ser-212' and regulates its activation and stimulates transcription of PMAIP1 in a FOXO1-dependent manner. Phosphorylates SIRT1 and inhibits SIRT1-mediated p53/TP53 deacetylation, thereby promoting p53/TP53 dependent transcription and apoptosis upon DNA damage. Acts as an inhibitor of PKB/AKT1. Phosphorylates AR on 'Ser-650' and suppresses its activity by intersecting with PKB/AKT1 signaling and antagonizing formation of AR-chromatin complexes. This is Serine/threonine-protein kinase 4 (STK4) from Papio anubis (Olive baboon).